We begin with the raw amino-acid sequence, 94 residues long: C-X-C motif chemokine 11 (94 aa).

The N-terminal stretch at 1 to 21 (MSVKGMAIALAVILCATVVQG) is a signal peptide. Position 27 is a citrulline; by PAD2 (R27). 2 disulfide bridges follow: C30–C57 and C32–C74.

Interacts with TNFAIP6 (via Link domain). High levels in peripheral blood leukocytes, pancreas and liver astrocytes. Moderate levels in thymus, spleen and lung. Low levels in placenta, prostate and small intestine. Also found in epidermal basal layer keratinocytes in skin disorders.

The protein resides in the secreted. Chemotactic for interleukin-activated T-cells but not unstimulated T-cells, neutrophils or monocytes. Induces calcium release in activated T-cells. Binds to CXCR3. May play an important role in CNS diseases which involve T-cell recruitment. May play a role in skin immune responses. This chain is C-X-C motif chemokine 11 (CXCL11), found in Homo sapiens (Human).